Reading from the N-terminus, the 390-residue chain is tRNA(Met) cytidine acetate ligase (390 aa).

ATP is bound by residues 7–20, Gly101, Asn162, and Arg187; that span reads VVEYNPFHNGHKLH.

It belongs to the TmcAL family.

The protein localises to the cytoplasm. It catalyses the reaction cytidine(34) in elongator tRNA(Met) + acetate + ATP = N(4)-acetylcytidine(34) in elongator tRNA(Met) + AMP + diphosphate. Its function is as follows. Catalyzes the formation of N(4)-acetylcytidine (ac(4)C) at the wobble position of elongator tRNA(Met), using acetate and ATP as substrates. First activates an acetate ion to form acetyladenylate (Ac-AMP) and then transfers the acetyl group to tRNA to form ac(4)C34. This Listeria monocytogenes serovar 1/2a (strain ATCC BAA-679 / EGD-e) protein is tRNA(Met) cytidine acetate ligase.